A 506-amino-acid chain; its full sequence is UDP-N-acetylglucosamine--peptide N-acetylglucosaminyltransferase GtfA subunit (506 aa).

16–19 (GVEY) serves as a coordination point for UDP. An N-acetyl-D-glucosamine-binding site is contributed by H241. A UDP-binding site is contributed by 384–385 (HK). 404–407 (EGFG) provides a ligand contact to N-acetyl-D-glucosamine.

This sequence belongs to the glycosyltransferase group 1 family. Glycosyltransferase 4 subfamily. Interacts with stabilizing protein GtfB (Gtf2), probably as a heterotetramer with 2 subunits each of GtfA and GtfB, part of the accessory SecA2/SecY2 protein translocation apparatus.

It is found in the cytoplasm. The protein resides in the cell membrane. The catalysed reaction is L-seryl-[protein] + UDP-N-acetyl-alpha-D-glucosamine = 3-O-[N-acetyl-alpha-D-glucosaminyl]-L-seryl-[protein] + UDP + H(+). The protein operates within protein modification; protein glycosylation. In terms of biological role, required for polymorphic O-glycosylation of the serine-rich repeat protein Srr2. Catalyzes the first step in glycosylation by transferring N-acetylglucosamine from UDP-GlcNAc to serine residues of Srr2. Part of the accessory SecA2/SecY2 system specifically required to export serine-rich repeat proteins, probably Srr2 in this organism. The GtfA-GtfB (Gtf1-Gtf2 in this bacteria) complex adds GlcNAc from UDP-GlcNAc to Srr2 substrate. This subunit has low glycosyltransferase activity; GtfB enhances glycosyltransferase activity in vitro. Upon expression in S.parasanguis GtfA/GtfB restores expression of serine-rich repeat protein Fap1 and complements a biofilm formation defect. This is UDP-N-acetylglucosamine--peptide N-acetylglucosaminyltransferase GtfA subunit from Streptococcus agalactiae.